A 635-amino-acid chain; its full sequence is BTB/POZ domain-containing protein SETH6 (635 aa).

One can recognise a BTB domain in the interval 39-104 (SDLTIEVGSA…CYGVGVQYNS (66 aa)). Residues 206 to 494 (DWWGRSLPIL…VQVLFYEQTR (289 aa)) form the NPH3 domain. Residue Tyr-435 is modified to Phosphotyrosine. A disordered region spans residues 604 to 635 (QSVASSGKKHTEEKTNSERRFMFQKRRCHSVS). The span at 612-624 (KHTEEKTNSERRF) shows a compositional bias: basic and acidic residues. The segment covering 625-635 (MFQKRRCHSVS) has biased composition (basic residues).

Belongs to the NPH3 family.

Its pathway is protein modification; protein ubiquitination. Its function is as follows. May act as a substrate-specific adapter of an E3 ubiquitin-protein ligase complex (CUL3-RBX1-BTB) which mediates the ubiquitination and subsequent proteasomal degradation of target proteins. This Arabidopsis thaliana (Mouse-ear cress) protein is BTB/POZ domain-containing protein SETH6 (SETH6).